Reading from the N-terminus, the 904-residue chain is Shieldin complex subunit 2 (904 aa).

The segment at 1-60 (MSGGSQVHIFWGAPVAPLKMTVSQDTASLMSVADPWKKIHLLYSQHSLYLKDEKQHKNLE) is sufficient for interaction with SHLD3 and MAD2L2. Residues 1–568 (MSGGSQVHIF…AYVSSKHSYL (568 aa)) form an interaction with ASTE1 region. Residues 721–891 (KCSGVVLIQA…LQQDFSLLDF (171 aa)) form a mediates interaction with SHLD1 region.

This sequence belongs to the SHLD2 family. As to quaternary structure, component of the shieldin complex, consisting of SHLD1, SHLD2, SHLD3 and MAD2L2/REV7. Within the complex, SHLD2 forms a scaffold which interacts with a SHLD3-MAD2L2 subcomplex via its N-terminus, and with SHLD1 via its C-terminus. Interacts with TP53BP1. Interacts with RIF1. Interacts with ASTE1.

It localises to the chromosome. Its function is as follows. Component of the shieldin complex, which plays an important role in repair of DNA double-stranded breaks (DSBs). During G1 and S phase of the cell cycle, the complex functions downstream of TP53BP1 to promote non-homologous end joining (NHEJ) and suppress DNA end resection. Mediates various NHEJ-dependent processes including immunoglobulin class-switch recombination, and fusion of unprotected telomeres. This chain is Shieldin complex subunit 2, found in Pongo abelii (Sumatran orangutan).